The sequence spans 327 residues: Small ribosomal subunit protein uS4m (327 aa).

The S4 RNA-binding domain occupies 96–154; it reads SRLDMSIHRALFASSALQARQLVLHGKVHVNGKPERRAYRQLLPGDLVTVDQKSVMNCV. A compositionally biased stretch (polar residues) spans 156-173; sequence ASSNNTPSIQDGKQTEQV. A disordered region spans residues 156–199; it reads ASSNNTPSIQDGKQTEQVSSKDGENEKKKDNDDDLFEQTSNGKL. A compositionally biased stretch (basic and acidic residues) spans 174-186; the sequence is SSKDGENEKKKDN.

Belongs to the universal ribosomal protein uS4 family. Component of the mitochondrial small ribosomal subunit (mt-SSU). Mature yeast 74S mitochondrial ribosomes consist of a small (37S) and a large (54S) subunit. The 37S small subunit contains a 15S ribosomal RNA (15S mt-rRNA) and at least 32 different proteins. The 54S large subunit contains a 21S rRNA (21S mt-rRNA) and at least 45 different proteins. uS3m, uS4m and uS5m form the narrow entry site of the mRNA channel.

The protein resides in the mitochondrion. In terms of biological role, component of the mitochondrial ribosome (mitoribosome), a dedicated translation machinery responsible for the synthesis of mitochondrial genome-encoded proteins, including at least some of the essential transmembrane subunits of the mitochondrial respiratory chain. The mitoribosomes are attached to the mitochondrial inner membrane and translation products are cotranslationally integrated into the membrane. In Schizosaccharomyces pombe (strain 972 / ATCC 24843) (Fission yeast), this protein is Small ribosomal subunit protein uS4m (nam9).